The following is a 190-amino-acid chain: Threonylcarbamoyl-AMP synthase (190 aa).

One can recognise a YrdC-like domain in the interval 7-190 (RAALSDVLQA…ALTGKQFRQG (184 aa)).

The protein belongs to the SUA5 family. TsaC subfamily.

The protein resides in the cytoplasm. The catalysed reaction is L-threonine + hydrogencarbonate + ATP = L-threonylcarbamoyladenylate + diphosphate + H2O. Functionally, required for the formation of a threonylcarbamoyl group on adenosine at position 37 (t(6)A37) in tRNAs that read codons beginning with adenine. Catalyzes the conversion of L-threonine, HCO(3)(-)/CO(2) and ATP to give threonylcarbamoyl-AMP (TC-AMP) as the acyladenylate intermediate, with the release of diphosphate. The sequence is that of Threonylcarbamoyl-AMP synthase from Yersinia enterocolitica serotype O:8 / biotype 1B (strain NCTC 13174 / 8081).